The sequence spans 212 residues: Pyrrolidone-carboxylate peptidase (212 aa).

Catalysis depends on residues Glu78, Cys141, and His165.

This sequence belongs to the peptidase C15 family. In terms of assembly, homotetramer.

Its subcellular location is the cytoplasm. It carries out the reaction Release of an N-terminal pyroglutamyl group from a polypeptide, the second amino acid generally not being Pro.. Functionally, removes 5-oxoproline from various penultimate amino acid residues except L-proline. In Staphylococcus haemolyticus (strain JCSC1435), this protein is Pyrrolidone-carboxylate peptidase.